The following is a 411-amino-acid chain: Tyrosine--tRNA ligase (411 aa).

Tyrosine 34 lines the L-tyrosine pocket. The short motif at 39–48 (CTATSLHIGS) is the 'HIGH' region element. The L-tyrosine site is built by tyrosine 171 and glutamine 175. Residues 231–235 (KMGKT) carry the 'KMSKS' region motif. Lysine 234 provides a ligand contact to ATP. In terms of domain architecture, S4 RNA-binding spans 345-411 (ITAFELFHEA…GKKRHILVKI (67 aa)).

The protein belongs to the class-I aminoacyl-tRNA synthetase family. TyrS type 1 subfamily. Homodimer.

The protein localises to the cytoplasm. The catalysed reaction is tRNA(Tyr) + L-tyrosine + ATP = L-tyrosyl-tRNA(Tyr) + AMP + diphosphate + H(+). Functionally, catalyzes the attachment of tyrosine to tRNA(Tyr) in a two-step reaction: tyrosine is first activated by ATP to form Tyr-AMP and then transferred to the acceptor end of tRNA(Tyr). This is Tyrosine--tRNA ligase from Rickettsia bellii (strain RML369-C).